The sequence spans 89 residues: Antimicrobial peptide Ar-AMP (89 aa).

A signal peptide spans 1 to 25 (MVNMKSVALIVIVMMAFMMVDPSMG). Residues 26-68 (AGECVQGRCPSGMCCSQFGYCGRGPKYCGRASTTVDHQADAAA) form the Chitin-binding type-1 domain. Disulfide bonds link cysteine 29-cysteine 40, cysteine 34-cysteine 46, and cysteine 39-cysteine 53. The propeptide at 56 to 89 (ASTTVDHQADAAAAAATKTANNPTDAKLAGAGSP) is removed in mature form.

Its function is as follows. Chitin-binding protein that inhibits the growth of the fungal pathogens B.cinerea, F.culmorum, H.sativum and A.consortiale, but not that of R.solani. Induces morphological changes in the fungal pathogens F.culmorum, H.sativum and R.solani, but not in A.consortiale and B.cinerea. Has antibacterial activity against the Gram-positive bacterium B.subtilis, but lacks antibacterial activity against the Gram-negative bacterium E.coli. The chain is Antimicrobial peptide Ar-AMP from Amaranthus retroflexus (Redroot amaranth).